The primary structure comprises 184 residues: ATP synthase subunit b, chloroplastic (184 aa).

Residues 27 to 49 (LATNPINLSVVLGVLIFFGKGVL) traverse the membrane as a helical segment.

It belongs to the ATPase B chain family. In terms of assembly, F-type ATPases have 2 components, F(1) - the catalytic core - and F(0) - the membrane proton channel. F(1) has five subunits: alpha(3), beta(3), gamma(1), delta(1), epsilon(1). F(0) has four main subunits: a(1), b(1), b'(1) and c(10-14). The alpha and beta chains form an alternating ring which encloses part of the gamma chain. F(1) is attached to F(0) by a central stalk formed by the gamma and epsilon chains, while a peripheral stalk is formed by the delta, b and b' chains.

It is found in the plastid. Its subcellular location is the chloroplast thylakoid membrane. In terms of biological role, f(1)F(0) ATP synthase produces ATP from ADP in the presence of a proton or sodium gradient. F-type ATPases consist of two structural domains, F(1) containing the extramembraneous catalytic core and F(0) containing the membrane proton channel, linked together by a central stalk and a peripheral stalk. During catalysis, ATP synthesis in the catalytic domain of F(1) is coupled via a rotary mechanism of the central stalk subunits to proton translocation. Functionally, component of the F(0) channel, it forms part of the peripheral stalk, linking F(1) to F(0). This Piper cenocladum (Ant piper) protein is ATP synthase subunit b, chloroplastic.